A 212-amino-acid polypeptide reads, in one-letter code: Protein-L-isoaspartate O-methyltransferase (212 aa).

Serine 62 is a catalytic residue.

The protein belongs to the methyltransferase superfamily. L-isoaspartyl/D-aspartyl protein methyltransferase family.

It localises to the cytoplasm. It catalyses the reaction [protein]-L-isoaspartate + S-adenosyl-L-methionine = [protein]-L-isoaspartate alpha-methyl ester + S-adenosyl-L-homocysteine. In terms of biological role, catalyzes the methyl esterification of L-isoaspartyl residues in peptides and proteins that result from spontaneous decomposition of normal L-aspartyl and L-asparaginyl residues. It plays a role in the repair and/or degradation of damaged proteins. In Pseudoalteromonas translucida (strain TAC 125), this protein is Protein-L-isoaspartate O-methyltransferase.